Consider the following 147-residue polypeptide: Ubiquitin-conjugating enzyme E2 D4 (147 aa).

A UBC core domain is found at 1 to 147; the sequence is MALKRIQKEL…AREWTQKYAM (147 aa). Cysteine 85 serves as the catalytic Glycyl thioester intermediate.

This sequence belongs to the ubiquitin-conjugating enzyme family. As to quaternary structure, interacts with map3k10/mlk2. In terms of tissue distribution, at embryonic stages 28 to 35, expressed in the somites, eye primordia, otic vesicle and branchial arches. By stage 35, also weakly expressed in the pronephros.

The enzyme catalyses S-ubiquitinyl-[E1 ubiquitin-activating enzyme]-L-cysteine + [E2 ubiquitin-conjugating enzyme]-L-cysteine = [E1 ubiquitin-activating enzyme]-L-cysteine + S-ubiquitinyl-[E2 ubiquitin-conjugating enzyme]-L-cysteine.. It functions in the pathway protein modification; protein ubiquitination. Its function is as follows. Catalyzes the covalent attachment of ubiquitin to other proteins. Regulates pronephros development, possibly by promoting ubiquitination and thus inactivation or degradation of map3k10/mlk2. This is Ubiquitin-conjugating enzyme E2 D4 (ube2d4) from Xenopus laevis (African clawed frog).